The sequence spans 295 residues: Indole-3-glycerol phosphate synthase (295 aa).

It belongs to the TrpC family.

It catalyses the reaction 1-(2-carboxyphenylamino)-1-deoxy-D-ribulose 5-phosphate + H(+) = (1S,2R)-1-C-(indol-3-yl)glycerol 3-phosphate + CO2 + H2O. The protein operates within amino-acid biosynthesis; L-tryptophan biosynthesis; L-tryptophan from chorismate: step 4/5. This is Indole-3-glycerol phosphate synthase from Prochlorococcus marinus (strain NATL2A).